A 526-amino-acid chain; its full sequence is MAVFPSSGLPRCLLTLILLQLPKLDSAPFDVIGPPEPILAVVGEDAELPCRLSPNASAEHLELRWFRKKVSPAVLVHRDGREQEAEQMPEYRGRATLVQDGIAKGRVALRIRGVRVSDDGEYTCFFREDGSYEEALVHLKVAALGSDPHISMQVQENGEICLECTSVGWYPEPQVQWRTSKGEKFPSTSESRNPDEEGLFTVAASVIIRDTSAKNVSCYIQNLLLGQEKKVEISIPASSLPRLTPWIVAVAVILMVLGLLTIGSIFFTWRLYNERPRERRNEFSSKERLLEELKWKKATLHAVDVTLDPDTAHPHLFLYEDSKSVRLEDSRQKLPEKTERFDSWPCVLGRETFTSGRHYWEVEVGDRTDWAIGVCRENVMKKGFDPMTPENGFWAVELYGNGYWALTPLRTPLPLAGPPRRVGIFLDYESGDISFYNMNDGSDIYTFSNVTFSGPLRPFFCLWSSGKKPLTICPIADGPERVTVIANAQDLSKEIPLSPMGEDSAPRDADTLHSKLIPTQPSQGAP.

The first 26 residues, 1–26, serve as a signal peptide directing secretion; it reads MAVFPSSGLPRCLLTLILLQLPKLDS. 2 consecutive Ig-like V-type domains span residues 27–138 and 148–234; these read APFD…ALVH and PHIS…VEIS. Topologically, residues 27–242 are extracellular; that stretch reads APFDVIGPPE…ISIPASSLPR (216 aa). Cystine bridges form between cysteine 50–cysteine 124 and cysteine 164–cysteine 218. N-linked (GlcNAc...) asparagine glycosylation is found at asparagine 55 and asparagine 215. A helical membrane pass occupies residues 243–269; sequence LTPWIVAVAVILMVLGLLTIGSIFFTW. Residues 270–526 lie on the Cytoplasmic side of the membrane; that stretch reads RLYNERPRER…IPTQPSQGAP (257 aa). In terms of domain architecture, B30.2/SPRY spans 285–479; it reads SKERLLEELK…LTICPIADGP (195 aa). The interval 495–526 is disordered; the sequence is IPLSPMGEDSAPRDADTLHSKLIPTQPSQGAP. The segment covering 504–513 has biased composition (basic and acidic residues); sequence SAPRDADTLH. Residues 517–526 show a composition bias toward polar residues; sequence IPTQPSQGAP.

The protein belongs to the immunoglobulin superfamily. BTN/MOG family. As to quaternary structure, seems to associate with xanthine dehydrogenase/oxidase. In terms of processing, N-glycosylated.

It is found in the membrane. Its subcellular location is the secreted. In terms of biological role, may function in the secretion of milk-fat droplets. May act as a specific membrane-associated receptor for the association of cytoplasmic droplets with the apical plasma membrane. Inhibits the proliferation of CD4 and CD8 T-cells activated by anti-CD3 antibodies, T-cell metabolism and IL2 and IFNG secretion. The chain is Butyrophilin subfamily 1 member A1 (BTN1A1) from Homo sapiens (Human).